A 280-amino-acid polypeptide reads, in one-letter code: Ribosomal protein L11 methyltransferase (280 aa).

Positions 131, 152, 174, and 217 each coordinate S-adenosyl-L-methionine.

This sequence belongs to the methyltransferase superfamily. PrmA family.

It is found in the cytoplasm. It carries out the reaction L-lysyl-[protein] + 3 S-adenosyl-L-methionine = N(6),N(6),N(6)-trimethyl-L-lysyl-[protein] + 3 S-adenosyl-L-homocysteine + 3 H(+). Methylates ribosomal protein L11. This Bacteroides thetaiotaomicron (strain ATCC 29148 / DSM 2079 / JCM 5827 / CCUG 10774 / NCTC 10582 / VPI-5482 / E50) protein is Ribosomal protein L11 methyltransferase.